Consider the following 185-residue polypeptide: Large ribosomal subunit protein uL5 (185 aa).

The protein belongs to the universal ribosomal protein uL5 family. Part of the 50S ribosomal subunit; part of the 5S rRNA/L5/L18/L25 subcomplex. Contacts the 5S rRNA and the P site tRNA. Forms a bridge to the 30S subunit in the 70S ribosome.

This is one of the proteins that bind and probably mediate the attachment of the 5S RNA into the large ribosomal subunit, where it forms part of the central protuberance. In the 70S ribosome it contacts protein S13 of the 30S subunit (bridge B1b), connecting the 2 subunits; this bridge is implicated in subunit movement. Contacts the P site tRNA; the 5S rRNA and some of its associated proteins might help stabilize positioning of ribosome-bound tRNAs. The chain is Large ribosomal subunit protein uL5 from Rhizobium etli (strain CIAT 652).